A 151-amino-acid chain; its full sequence is MLP-like protein 328 (151 aa).

This sequence belongs to the MLP family.

In Arabidopsis thaliana (Mouse-ear cress), this protein is MLP-like protein 328 (MLP328).